The primary structure comprises 325 residues: Transaldolase (325 aa).

Lysine 125 acts as the Schiff-base intermediate with substrate in catalysis.

This sequence belongs to the transaldolase family. Type 2 subfamily.

The protein resides in the cytoplasm. It catalyses the reaction D-sedoheptulose 7-phosphate + D-glyceraldehyde 3-phosphate = D-erythrose 4-phosphate + beta-D-fructose 6-phosphate. Its pathway is carbohydrate degradation; pentose phosphate pathway; D-glyceraldehyde 3-phosphate and beta-D-fructose 6-phosphate from D-ribose 5-phosphate and D-xylulose 5-phosphate (non-oxidative stage): step 2/3. Transaldolase is important for the balance of metabolites in the pentose-phosphate pathway. The sequence is that of Transaldolase from Campylobacter jejuni subsp. doylei (strain ATCC BAA-1458 / RM4099 / 269.97).